A 613-amino-acid polypeptide reads, in one-letter code: Portal protein (613 aa).

The segment at 577-613 (ATGGDHGIRQAPSARGDAEPDHAKSKPARDPPPGAGS) is disordered. Basic and acidic residues predominate over residues 592 to 605 (GDAEPDHAKSKPAR).

Belongs to the herpesviridae portal protein family. As to quaternary structure, homododecamerizes. Interacts with terminase subunits TRM1 and TRM3.

The protein resides in the virion. It is found in the host nucleus. Forms a portal in the viral capsid through which viral DNA is translocated during DNA packaging. Assembles as a dodecamer at a single fivefold axe of the T=16 icosahedric capsid. Binds to the molecular motor that translocates the viral DNA, termed terminase. This Homo sapiens (Human) protein is Portal protein.